We begin with the raw amino-acid sequence, 196 residues long: Ribosome maturation factor RimP (196 aa).

Belongs to the RimP family.

It is found in the cytoplasm. Its function is as follows. Required for maturation of 30S ribosomal subunits. This Lawsonia intracellularis (strain PHE/MN1-00) protein is Ribosome maturation factor RimP.